The sequence spans 491 residues: Probable glycine dehydrogenase (decarboxylating) subunit 2 (491 aa).

The residue at position 273 (lysine 273) is an N6-(pyridoxal phosphate)lysine.

Belongs to the GcvP family. C-terminal subunit subfamily. The glycine cleavage system is composed of four proteins: P, T, L and H. In this organism, the P 'protein' is a heterodimer of two subunits. The cofactor is pyridoxal 5'-phosphate.

The catalysed reaction is N(6)-[(R)-lipoyl]-L-lysyl-[glycine-cleavage complex H protein] + glycine + H(+) = N(6)-[(R)-S(8)-aminomethyldihydrolipoyl]-L-lysyl-[glycine-cleavage complex H protein] + CO2. In terms of biological role, the glycine cleavage system catalyzes the degradation of glycine. The P protein binds the alpha-amino group of glycine through its pyridoxal phosphate cofactor; CO(2) is released and the remaining methylamine moiety is then transferred to the lipoamide cofactor of the H protein. In Bacillus cytotoxicus (strain DSM 22905 / CIP 110041 / 391-98 / NVH 391-98), this protein is Probable glycine dehydrogenase (decarboxylating) subunit 2.